The sequence spans 64 residues: Bubble protein (64 aa).

4 disulfides stabilise this stretch: cysteine 3–cysteine 30, cysteine 18–cysteine 38, cysteine 28–cysteine 54, and cysteine 49–cysteine 64.

It is found in the secreted. May act as a toxin. May recognize a molecule or part of a molecule with a negatively charged surface potential. In Penicillium brevicompactum, this protein is Bubble protein.